The chain runs to 671 residues: Probable potassium transport system protein Kup 2 (671 aa).

Helical transmembrane passes span 12-32, 56-76, 99-119, 139-159, 172-192, 218-238, 251-271, 296-316, 345-365, 374-394, 400-420, and 429-449; these read FAGLLIAIGIVYGDIGTSPLY, ISLILWTVTLLTTVKYVMIAL, WLVIPALIGGAALLADGTLTP, IPVPSQEVVIMITIIILVILF, AFGPIMLIWFTFLGVVGIANL, VGILILGSVFLATTGAEALYS, SWPYIFVCLSLNYLGQGAWIL, LFAIALATIAAIIASQALITG, IYIPLINKMICVVTVAIVFLF, AYGLAITVTMLMTTILLFEYL, PLYLRVIFLIAFAFIEGMFLI, and GGYVTVLIAGFILVIMYVWFY.

The protein belongs to the HAK/KUP transporter (TC 2.A.72) family.

It localises to the cell membrane. The catalysed reaction is K(+)(in) + H(+)(in) = K(+)(out) + H(+)(out). Functionally, transport of potassium into the cell. Likely operates as a K(+):H(+) symporter. The polypeptide is Probable potassium transport system protein Kup 2 (Lactobacillus acidophilus (strain ATCC 700396 / NCK56 / N2 / NCFM)).